The sequence spans 302 residues: Sulfate adenylyltransferase subunit 2 (302 aa).

This sequence belongs to the PAPS reductase family. CysD subfamily. As to quaternary structure, heterodimer composed of CysD, the smaller subunit, and CysN.

The enzyme catalyses sulfate + ATP + H(+) = adenosine 5'-phosphosulfate + diphosphate. The protein operates within sulfur metabolism; hydrogen sulfide biosynthesis; sulfite from sulfate: step 1/3. Its function is as follows. With CysN forms the ATP sulfurylase (ATPS) that catalyzes the adenylation of sulfate producing adenosine 5'-phosphosulfate (APS) and diphosphate, the first enzymatic step in sulfur assimilation pathway. APS synthesis involves the formation of a high-energy phosphoric-sulfuric acid anhydride bond driven by GTP hydrolysis by CysN coupled to ATP hydrolysis by CysD. This Escherichia coli O7:K1 (strain IAI39 / ExPEC) protein is Sulfate adenylyltransferase subunit 2.